The sequence spans 327 residues: Ventral anterior homeobox 1 (327 aa).

A compositionally biased stretch (basic and acidic residues) spans 1-34 (MFGKQDKMDVRCSTETEANRVSKNGHKEGKDSKG). The tract at residues 1 to 41 (MFGKQDKMDVRCSTETEANRVSKNGHKEGKDSKGAEGNIST) is disordered. A DNA-binding region (homeobox) is located at residues 99 to 158 (PKRTRTSFTAEQLYRLEMEFQRCQYVVGRERTELARQLNLSETQVKVWFQNRRTKQKKDQ). Residues 230–245 (APAGGSPHPPSAGTAA) show a composition bias toward low complexity. A disordered region spans residues 230 to 249 (APAGGSPHPPSAGTAAGPPP).

The protein belongs to the EMX homeobox family.

It localises to the nucleus. Transcription factor that plays a role in establishing dorsal-ventral polarity in the neural retina. This Gallus gallus (Chicken) protein is Ventral anterior homeobox 1 (VAX1).